The primary structure comprises 371 residues: Galanin receptor type 2 (371 aa).

The Extracellular portion of the chain corresponds to 1 to 27 (MNGSDSQGAEDSSQEGGGGWQPEAVLV). Asparagine 2 carries N-linked (GlcNAc...) asparagine glycosylation. Residues 28 to 48 (PLFFALIFLVGAVGNALVLAV) form a helical membrane-spanning segment. The Cytoplasmic segment spans residues 49-59 (LLRGGQAVSTT). Residues 60 to 80 (NLFILNLGVADLCFILCCVPF) traverse the membrane as a helical segment. Residues 81–98 (QATIYTLDDWVFGSLLCK) lie on the Extracellular side of the membrane. Cysteine 97 and cysteine 174 are oxidised to a cystine. The helical transmembrane segment at 99–120 (AVHFLIFLTMHASSFTLAAVSL) threads the bilayer. At 121 to 140 (DRYLAIRYPLHSRELRTPRN) the chain is on the cytoplasmic side. The helical transmembrane segment at 141–161 (ALAAIGLIWGLALLFSGPYLS) threads the bilayer. At 162-186 (YYSQSQLANLTVCHPAWSAPRRRAM) the chain is on the extracellular side. Residues 187–207 (DLCTFVFSYLLPVLVLSLTYA) traverse the membrane as a helical segment. The Cytoplasmic segment spans residues 208-236 (RTLHYLWRTVDPVAAGSGSQRAKRKVTRM). The helical transmembrane segment at 237-257 (IVIVAVLFCLCWMPHHALILC) threads the bilayer. The Extracellular segment spans residues 258 to 259 (VW). Residues 260–280 (FGRFPLTRATYALRILSHLVS) traverse the membrane as a helical segment. Residues 281–371 (YANSCVNPIV…TLSRTLDPAC (91 aa)) lie on the Cytoplasmic side of the membrane.

The protein belongs to the G-protein coupled receptor 1 family.

The protein localises to the cell membrane. Its function is as follows. Receptor for the hormone galanin, GALP and spexin-1. The activity of this receptor is mediated by G proteins that activate the phospholipase C/protein kinase C pathway (via G(q)) and that inhibit adenylyl cyclase (via G(i)). In Mus musculus (Mouse), this protein is Galanin receptor type 2 (Galr2).